The chain runs to 489 residues: uncharacterized protein (489 aa).

11 helical membrane passes run 29–49 (FIAS…TGLG), 67–87 (LLYA…KYLG), 90–110 (WALA…WYFD), 119–139 (IFTG…TAYI), 152–172 (FIAT…FIAF), 186–206 (AVYI…ILFI), 276–296 (LNNV…TLIL), 308–328 (IIGL…ELGW), 351–371 (GGAL…IVSV), 397–417 (AAGM…LGQG), and 418–438 (IIYF…TSIF).

The protein resides in the membrane. This is an uncharacterized protein from Schizosaccharomyces pombe (strain 972 / ATCC 24843) (Fission yeast).